We begin with the raw amino-acid sequence, 73 residues long: Defensin-like protein 6 (73 aa).

The signal sequence occupies residues 1-26 (MENKFFAAFFLLLVLFSSQEIIGGEG). 4 cysteine pairs are disulfide-bonded: Cys-29-Cys-73, Cys-40-Cys-60, Cys-46-Cys-67, and Cys-50-Cys-69.

This sequence belongs to the DEFL family.

The protein localises to the secreted. Confers broad-spectrum resistance to pathogens. The chain is Defensin-like protein 6 (PDF2.5) from Arabidopsis thaliana (Mouse-ear cress).